A 388-amino-acid chain; its full sequence is MRFSIRRFFSAASGGAIILLLSALLGLLLSNSFLSESYFKVLHLKMPFSALDDAPNLAEFISIAPMSLFFFVVIAEIKEEIISGHLASFRRVILPLISALGGMMIPACLYGLITSGHLEVSRGWAIPIATDAAFTLPIILALGRHVSEGARVWLMALAIFDDLLGIVVIALFYASHLNGYALFAAGLITAVMIGLNKKSVQNLWVYASAGVVLWWALLVSGLHPTIAGVITGLALPSVADQPEKASPLERGKQIIAPWVTWLILPLFGFVSMGMSLSAMSFHVLLAPVPLGVALGLFLGKPIGVFGATIMATRLKIATLPKGTSLRMLFGLSLLCGIGFTISLFIAELAFSGSDFLVPAKYGILMGSLLSALAGWLWLRFLKFPAKGV.

The next 11 helical transmembrane spans lie at 8–28, 57–77, 93–113, 123–143, 152–172, 175–195, 210–230, 254–274, 278–298, 328–348, and 361–381; these read FFSA…LGLL, LAEF…IAEI, ILPL…YGLI, GWAI…LALG, VWLM…IALF, SHLN…MIGL, GVVL…AGVI, IIAP…SMGM, AMSF…GLFL, LFGL…IAEL, and YGIL…LRFL.

This sequence belongs to the NhaA Na(+)/H(+) (TC 2.A.33) antiporter family.

It is found in the cell inner membrane. The catalysed reaction is Na(+)(in) + 2 H(+)(out) = Na(+)(out) + 2 H(+)(in). Na(+)/H(+) antiporter that extrudes sodium in exchange for external protons. This chain is Na(+)/H(+) antiporter NhaA, found in Zymomonas mobilis subsp. mobilis (strain ATCC 31821 / ZM4 / CP4).